The sequence spans 110 residues: Large ribosomal subunit protein uL22 (110 aa).

Belongs to the universal ribosomal protein uL22 family. Part of the 50S ribosomal subunit.

Functionally, this protein binds specifically to 23S rRNA; its binding is stimulated by other ribosomal proteins, e.g. L4, L17, and L20. It is important during the early stages of 50S assembly. It makes multiple contacts with different domains of the 23S rRNA in the assembled 50S subunit and ribosome. The globular domain of the protein is located near the polypeptide exit tunnel on the outside of the subunit, while an extended beta-hairpin is found that lines the wall of the exit tunnel in the center of the 70S ribosome. This is Large ribosomal subunit protein uL22 from Buchnera aphidicola subsp. Schizaphis graminum (strain Sg).